A 430-amino-acid chain; its full sequence is ATP-dependent protease ATPase subunit HslU (430 aa).

ATP-binding positions include V18, 60-65, D243, E308, and R380; that span reads GVGKTE.

The protein belongs to the ClpX chaperone family. HslU subfamily. A double ring-shaped homohexamer of HslV is capped on each side by a ring-shaped HslU homohexamer. The assembly of the HslU/HslV complex is dependent on binding of ATP.

It localises to the cytoplasm. Its function is as follows. ATPase subunit of a proteasome-like degradation complex; this subunit has chaperone activity. The binding of ATP and its subsequent hydrolysis by HslU are essential for unfolding of protein substrates subsequently hydrolyzed by HslV. HslU recognizes the N-terminal part of its protein substrates and unfolds these before they are guided to HslV for hydrolysis. This chain is ATP-dependent protease ATPase subunit HslU, found in Caulobacter vibrioides (strain ATCC 19089 / CIP 103742 / CB 15) (Caulobacter crescentus).